We begin with the raw amino-acid sequence, 324 residues long: HTH-type transcriptional regulator CysB (324 aa).

Positions 1–59 constitute an HTH lysR-type domain; sequence MKLQQLRYIVEVVNHNLNVSSTAEGLYTSQPGISKQVRMLEDELGIQIFARSGKHLTQV. The segment at residues 19–38 is a DNA-binding region (H-T-H motif); sequence VSSTAEGLYTSQPGISKQVR.

The protein belongs to the LysR transcriptional regulatory family. As to quaternary structure, homotetramer.

It localises to the cytoplasm. Functionally, this protein is a positive regulator of gene expression for the cysteine regulon, a system of 10 or more loci involved in the biosynthesis of L-cysteine from inorganic sulfate. The inducer for CysB is N-acetylserine. CysB inhibits its own transcription. This chain is HTH-type transcriptional regulator CysB (cysB), found in Salmonella typhimurium (strain LT2 / SGSC1412 / ATCC 700720).